The following is a 432-amino-acid chain: Phosphomethylpyrimidine synthase (432 aa).

Substrate contacts are provided by residues Asn-66, Met-95, Tyr-124, His-163, 185 to 187 (SRG), 226 to 229 (DGLR), and Glu-265. A Zn(2+)-binding site is contributed by His-269. Tyr-292 is a binding site for substrate. His-333 is a Zn(2+) binding site. The [4Fe-4S] cluster site is built by Cys-409, Cys-412, and Cys-416.

It belongs to the ThiC family. The cofactor is [4Fe-4S] cluster.

It carries out the reaction 5-amino-1-(5-phospho-beta-D-ribosyl)imidazole + S-adenosyl-L-methionine = 4-amino-2-methyl-5-(phosphooxymethyl)pyrimidine + CO + 5'-deoxyadenosine + formate + L-methionine + 3 H(+). Its pathway is cofactor biosynthesis; thiamine diphosphate biosynthesis. Catalyzes the synthesis of the hydroxymethylpyrimidine phosphate (HMP-P) moiety of thiamine from aminoimidazole ribotide (AIR) in a radical S-adenosyl-L-methionine (SAM)-dependent reaction. The sequence is that of Phosphomethylpyrimidine synthase from Thermoanaerobacter sp. (strain X514).